Reading from the N-terminus, the 208-residue chain is 3-demethoxyubiquinol 3-hydroxylase (208 aa).

Glu57, Glu87, His90, Glu139, Glu171, and His174 together coordinate Fe cation.

It belongs to the COQ7 family. Fe cation is required as a cofactor.

It is found in the cell membrane. It carries out the reaction a 5-methoxy-2-methyl-3-(all-trans-polyprenyl)benzene-1,4-diol + AH2 + O2 = a 3-demethylubiquinol + A + H2O. It functions in the pathway cofactor biosynthesis; ubiquinone biosynthesis. In terms of biological role, catalyzes the hydroxylation of 2-nonaprenyl-3-methyl-6-methoxy-1,4-benzoquinol during ubiquinone biosynthesis. This is 3-demethoxyubiquinol 3-hydroxylase from Herbaspirillum seropedicae.